The primary structure comprises 150 residues: Guanine nucleotide-binding protein subunit gamma 2 (150 aa).

Residues 1–11 (MRGEANGEEEQ) show a composition bias toward acidic residues. Residues 1–59 (MRGEANGEEEQQPPRRNHLRDDAEEEEEVERRAARPVSGQQQQQQRRRPTDVGGGAAMR) are disordered. The stretch at 65 to 97 (GKHRLSAAIARLDQELQSLQDELNELETMEPAS) forms a coiled coil. The region spanning 71-137 (AAIARLDQEL…RWFQRVRSSR (67 aa)) is the G protein gamma domain.

G proteins are composed of 3 units, alpha, beta and gamma. Interacts with the beta subunit RGB1.

It localises to the cell membrane. In terms of biological role, guanine nucleotide-binding proteins (G proteins) are involved as modulators or transducers in various transmembrane signaling systems. This is Guanine nucleotide-binding protein subunit gamma 2 from Oryza sativa subsp. indica (Rice).